A 258-amino-acid chain; its full sequence is Probable F-box protein At2g29610 (258 aa).

The interval 1–25 (MVELSEIPGDPNGADPNNNPQEEDE) is disordered. Over residues 8–20 (PGDPNGADPNNNP) the composition is skewed to low complexity. In terms of domain architecture, F-box spans 28–74 (LPILLQLPEELIERIIAHFPQCYSPSPILVCETFRQVINSDHFYYVT).

The polypeptide is Probable F-box protein At2g29610 (Arabidopsis thaliana (Mouse-ear cress)).